An 804-amino-acid polypeptide reads, in one-letter code: MHNFSKLAVAFVAAASFASAEPETKAKVERPIIYFPRHIKRQFANTTTPASEASSSTSRPPPIPVPETSSFSSSASSSSAQELTASRQPTSIDEFFSTLSDALTTDSTPFSQRPATSGAGRSSATGDVTPIIVPSSASPPSTAVKPGSVSALTTSQNSTSAATSESVTSPGSTSGPAGTPESSSASDFTSAVATSRASTATSNTGLIPETTILPTTATSNTGLIPETTILPTTASLSTAESAVTPSITSSASSSGILIAPTGVVTPTSSSSTEDPVFDGIGTLISSIVSSVSTVLQPNGTAPVTTTPNTSVDVATTPVDIASTTASDTLSPTTAVVSTTGPVTSVQTLPPVSTPTANGTVTSPPVDSQTTVLPTTTPGLSSDTIVTSPGVTANSTQVPTTVPTTIPTTQPPVTEPTITPTVLPPSPNNTVPSNTTTQLPPTQAPTLTQLPTTTTSPALTTPATTPSVAPTSATSSANSNDDWLPTTIIVQAPLPSTTGSSTNAPSSAPTVLPSDLPKIINPSDDITEPLGPDMMEIQVAFKFALNYRFITNENPNAGAQIFEYLPKSLKYMEGLTEEQKKRLQVLRVVPLNTEQQLGYVTSVAIATWPKAFFPQLRLDVKTPFSQFYQNTSNGMLAHNLTMLVNPAIDILPGATLDGKPAGAGSGTGGNGSNGPNDVFNNDNNSTNQSATQRGTVAGIAFGAVSLAAAYGAAMFIVARRYKKKRQAHRRSSSVATPSEMRQSGSPALMGGALLSRDFTHYGGVMGPAGGRESHGSNGSGRSAGNSARTAGISAPVAQENSLGWN.

A signal peptide spans 1–20 (MHNFSKLAVAFVAAASFASA). At 21–694 (EPETKAKVER…TNQSATQRGT (674 aa)) the chain is on the extracellular side. N-linked (GlcNAc...) asparagine glycosylation is present at Asn-45. 2 stretches are compositionally biased toward low complexity: residues 46–58 (TTTPASEASSSTS) and 69–80 (SSFSSSASSSSA). 2 disordered regions span residues 46 to 90 (TTTP…RQPT) and 105 to 220 (TDST…ATSN). Residues 46–475 (TTTPASEASS…SVAPTSATSS (430 aa)) form a serine/threonine rich region (STR) region. 2 stretches are compositionally biased toward polar residues: residues 81–90 (QELTASRQPT) and 109–126 (PFSQRPATSGAGRSSATG). 2 stretches are compositionally biased toward low complexity: residues 128 to 143 (VTPIIVPSSASPPSTA) and 150 to 169 (SALTTSQNSTSAATSESVTS). Residue Asn-157 is glycosylated (N-linked (GlcNAc...) asparagine). Over residues 170 to 188 (PGSTSGPAGTPESSSASDF) the composition is skewed to polar residues. Residues 189-202 (TSAVATSRASTATS) are compositionally biased toward low complexity. 4 N-linked (GlcNAc...) asparagine glycosylation sites follow: Asn-298, Asn-308, Asn-357, and Asn-393. Residues 345–394 (VQTLPPVSTPTANGTVTSPPVDSQTTVLPTTTPGLSSDTIVTSPGVTANS) show a composition bias toward polar residues. The interval 345-516 (VQTLPPVSTP…APTVLPSDLP (172 aa)) is disordered. Low complexity-rich tracts occupy residues 395-407 (TQVPTTVPTTIPT) and 427-476 (NNTV…TSSA). N-linked (GlcNAc...) asparagine glycans are attached at residues Asn-427 and Asn-433. The HKR11-MSB2 homology domain (HMH) stretch occupies residues 482–641 (WLPTTIIVQA…NGMLAHNLTM (160 aa)). The segment covering 493-508 (LPSTTGSSTNAPSSAP) has biased composition (polar residues). 5 N-linked (GlcNAc...) asparagine glycosylation sites follow: Asn-629, Asn-638, Asn-669, Asn-683, and Asn-686. The tract at residues 658–689 (KPAGAGSGTGGNGSNGPNDVFNNDNNSTNQSA) is disordered. Gly residues predominate over residues 660–671 (AGAGSGTGGNGS). Low complexity predominate over residues 672–686 (NGPNDVFNNDNNSTN). Residues 695–715 (VAGIAFGAVSLAAAYGAAMFI) traverse the membrane as a helical segment. Over 716-804 (VARRYKKKRQ…VAQENSLGWN (89 aa)) the chain is Cytoplasmic. 2 disordered regions span residues 724–748 (RQAHRRSSSVATPSEMRQSGSPALM) and 762–804 (GVMG…LGWN). A compositionally biased stretch (polar residues) spans 731 to 744 (SSVATPSEMRQSGS). Positions 774 to 787 (GSNGSGRSAGNSAR) are enriched in low complexity.

This sequence belongs to the HKR1/MSB2 family.

It localises to the cell membrane. Its subcellular location is the vacuole membrane. Functionally, MSB2 and SHO1 have overlapping functions in recognizing various surface signals for MAPK PMK1 activation and appressorium formation. While MSB2 is critical for sensing surface hydrophobicity and cutin monomers, SHO1 may play a more important role in recognizing rice leaf waxes. The protein is Cell surface sensor MSB2 of Pyricularia oryzae (strain 70-15 / ATCC MYA-4617 / FGSC 8958) (Rice blast fungus).